A 143-amino-acid chain; its full sequence is uncharacterized protein (143 aa).

An HTH cro/C1-type domain is found at 24 to 78 (IRQRRRWQNMSQAALGEAIGVTFQQVQKYEKGSNRVGAGRLQQISDALEVHPSYF). Residues 35–54 (QAALGEAIGVTFQQVQKYEK) constitute a DNA-binding region (H-T-H motif).

This is an uncharacterized protein from Sinorhizobium fredii (strain NBRC 101917 / NGR234).